The primary structure comprises 338 residues: Adenylosuccinate synthetase (338 aa).

Residues 12–18 and 42–44 contribute to the GTP site; these read GDEGKGK and GHT. The active-site Proton acceptor is D13. The Mg(2+) site is built by D13 and G42. Residues 13–16, 40–43, T127, R141, Q179, T194, and R256 contribute to the IMP site; these read DEGK and NAGH. The active-site Proton donor is H43. Residue 252 to 258 participates in substrate binding; sequence TVTGRRR. GTP contacts are provided by residues R258, 284–286, and 324–326; these read CLD and STG.

Belongs to the adenylosuccinate synthetase family. In terms of assembly, homodimer. The cofactor is Mg(2+).

It is found in the cytoplasm. The enzyme catalyses IMP + L-aspartate + GTP = N(6)-(1,2-dicarboxyethyl)-AMP + GDP + phosphate + 2 H(+). It functions in the pathway purine metabolism; AMP biosynthesis via de novo pathway; AMP from IMP: step 1/2. Its function is as follows. Plays an important role in the de novo pathway of purine nucleotide biosynthesis. Catalyzes the first committed step in the biosynthesis of AMP from IMP. The chain is Adenylosuccinate synthetase from Methanococcus maripaludis (strain C7 / ATCC BAA-1331).